The following is a 144-amino-acid chain: Large ribosomal subunit protein uL11 (144 aa).

The protein belongs to the universal ribosomal protein uL11 family. In terms of assembly, part of the ribosomal stalk of the 50S ribosomal subunit. Interacts with L10 and the large rRNA to form the base of the stalk. L10 forms an elongated spine to which L12 dimers bind in a sequential fashion forming a multimeric L10(L12)X complex. One or more lysine residues are methylated.

Functionally, forms part of the ribosomal stalk which helps the ribosome interact with GTP-bound translation factors. This chain is Large ribosomal subunit protein uL11, found in Rhodococcus erythropolis (strain PR4 / NBRC 100887).